The following is an 893-amino-acid chain: Zinc finger protein 281 (893 aa).

4 disordered regions span residues 1-113 (MKIG…FPSQ), 126-148 (IKQE…HHHY), 153-172 (AGAE…SHGV), and 198-251 (SGSR…GAVL). Lys2 is covalently cross-linked (Glycyl lysine isopeptide (Lys-Gly) (interchain with G-Cter in SUMO2)). The span at 7–36 (FLSGGGGPSSSGGSGSGGSSGSASGGSGGG) shows a compositional bias: gly residues. Residues Lys100 and Lys127 each participate in a glycyl lysine isopeptide (Lys-Gly) (interchain with G-Cter in SUMO2) cross-link. Positions 127–139 (KQEKPADPEEQPS) are enriched in basic and acidic residues. Residues 161–170 (GLGGGEGGSH) show a composition bias toward gly residues. The span at 201-216 (RTDEHGNQEPKQDANV) shows a compositional bias: basic and acidic residues. Residues Lys211, Lys217, Lys223, Lys230, Lys240, and Lys256 each participate in a glycyl lysine isopeptide (Lys-Gly) (interchain with G-Cter in SUMO2) cross-link. 3 C2H2-type zinc fingers span residues 258 to 280 (HICD…VLIH), 286 to 308 (FQCS…EKIH), and 314 to 336 (FGCD…KRTH). Residues Lys298 and Lys322 each participate in a glycyl lysine isopeptide (Lys-Gly) (interchain with G-Cter in SUMO2) cross-link. A C2H2-type 4; atypical zinc finger spans residues 342 to 364 (YKCDTCQQYFSRTDRLLKHRRTC). A Glycyl lysine isopeptide (Lys-Gly) (interchain with G-Cter in SUMO2) cross-link involves residue Lys370. A disordered region spans residues 371-425 (GAASAEPGSSNHNSMGNLAVLSQGNTSSSRRKSKSKSIAIENKEHKTGKTNESQM). The segment covering 377–396 (PGSSNHNSMGNLAVLSQGNT) has biased composition (polar residues). Ser392 carries the phosphoserine modification. Glycyl lysine isopeptide (Lys-Gly) (interchain with G-Cter in SUMO2) cross-links involve residues Lys406, Lys413, Lys457, and Lys474. Position 481 is a phosphoserine (Ser481). Residues Lys490, Lys495, Lys536, Lys596, Lys614, and Lys619 each participate in a glycyl lysine isopeptide (Lys-Gly) (interchain with G-Cter in SUMO2) cross-link. The segment at 613–658 (GKSETQKEDPFNLTEPRVDLHTSGEHSELVQEENLSPGTQTPSNDK) is disordered. The segment covering 616-641 (ETQKEDPFNLTEPRVDLHTSGEHSEL) has biased composition (basic and acidic residues). A compositionally biased stretch (polar residues) spans 645–658 (ENLSPGTQTPSNDK). Ser648 bears the Phosphoserine mark. Glycyl lysine isopeptide (Lys-Gly) (interchain with G-Cter in SUMO2) cross-links involve residues Lys658 and Lys667. Over residues 775 to 813 (SSAFQSSSQKLTSQKEQQKNLESSTSFQIPSQELASQID) the composition is skewed to polar residues. The tract at residues 775 to 815 (SSAFQSSSQKLTSQKEQQKNLESSTSFQIPSQELASQIDPQ) is disordered. Ser782 bears the Phosphoserine mark. Glycyl lysine isopeptide (Lys-Gly) (interchain with G-Cter in SUMO2) cross-links involve residues Lys784, Lys789, and Lys793. Residue Ser805 is modified to Phosphoserine. Residues Lys816 and Lys838 each participate in a glycyl lysine isopeptide (Lys-Gly) (interchain with G-Cter in SUMO2) cross-link. A Phosphothreonine modification is found at Thr886.

The protein belongs to the krueppel C2H2-type zinc-finger protein family. Interacts with NANOG. Associates with the NuRD complex.

It localises to the nucleus. Transcription repressor that plays a role in regulation of embryonic stem cells (ESCs) differentiation. Required for ESCs differentiation and acts by mediating autorepression of NANOG in ESCs: binds to the NANOG promoter and promotes association of NANOG protein to its own promoter and recruits the NuRD complex, which deacetylates histones. Not required for establishement and maintenance of ESCs. Represses the transcription of a number of genes including GAST, ODC1 and VIM. Binds to the G-rich box in the enhancer region of these genes. The protein is Zinc finger protein 281 (Znf281) of Mus musculus (Mouse).